A 554-amino-acid polypeptide reads, in one-letter code: Tetratricopeptide repeat protein 34 (554 aa).

TPR repeat units lie at residues 38 to 71, 166 to 199, 200 to 233, 294 to 327, 328 to 361, 411 to 445, 452 to 485, and 500 to 533; these read ETSC…RPQA, SESL…EPGN, VKAL…DPGT, PSWR…TPSS, EAAQ…DTQD, NPYH…PAED, SEDF…APAQ, and ASVF…DPSH.

This is Tetratricopeptide repeat protein 34 (Ttc34) from Mus musculus (Mouse).